The following is a 158-amino-acid chain: Ribosomal RNA large subunit methyltransferase H (158 aa).

Residues L73, G107, and 126–131 (FGEITL) each bind S-adenosyl-L-methionine.

This sequence belongs to the RNA methyltransferase RlmH family. As to quaternary structure, homodimer.

It is found in the cytoplasm. It catalyses the reaction pseudouridine(1915) in 23S rRNA + S-adenosyl-L-methionine = N(3)-methylpseudouridine(1915) in 23S rRNA + S-adenosyl-L-homocysteine + H(+). Specifically methylates the pseudouridine at position 1915 (m3Psi1915) in 23S rRNA. The polypeptide is Ribosomal RNA large subunit methyltransferase H (Rubrobacter xylanophilus (strain DSM 9941 / JCM 11954 / NBRC 16129 / PRD-1)).